We begin with the raw amino-acid sequence, 38 residues long: Photosystem II reaction center protein L (38 aa).

Residues 17-37 (SLFWGLLLIFVLAVLFSSYFF) form a helical membrane-spanning segment.

Belongs to the PsbL family. As to quaternary structure, PSII is composed of 1 copy each of membrane proteins PsbA, PsbB, PsbC, PsbD, PsbE, PsbF, PsbH, PsbI, PsbJ, PsbK, PsbL, PsbM, PsbT, PsbX, PsbY, PsbZ, Psb30/Ycf12, at least 3 peripheral proteins of the oxygen-evolving complex and a large number of cofactors. It forms dimeric complexes.

It localises to the plastid. The protein localises to the chloroplast thylakoid membrane. In terms of biological role, one of the components of the core complex of photosystem II (PSII). PSII is a light-driven water:plastoquinone oxidoreductase that uses light energy to abstract electrons from H(2)O, generating O(2) and a proton gradient subsequently used for ATP formation. It consists of a core antenna complex that captures photons, and an electron transfer chain that converts photonic excitation into a charge separation. This subunit is found at the monomer-monomer interface and is required for correct PSII assembly and/or dimerization. The chain is Photosystem II reaction center protein L from Porphyra purpurea (Red seaweed).